Consider the following 115-residue polypeptide: V-type proton ATPase subunit G (115 aa).

It belongs to the V-ATPase G subunit family. V-ATPase is a heteromultimeric enzyme composed of a peripheral catalytic V1 complex (components A to H) attached to an integral membrane V0 proton pore complex (components: a, c, c', c'', d, e, f and VOA1).

The protein localises to the vacuole membrane. Subunit of the V1 complex of vacuolar(H+)-ATPase (V-ATPase), a multisubunit enzyme composed of a peripheral complex (V1) that hydrolyzes ATP and a membrane integral complex (V0) that translocates protons. V-ATPase is responsible for acidifying and maintaining the pH of intracellular compartments. This chain is V-type proton ATPase subunit G (vma-10), found in Neurospora crassa (strain ATCC 24698 / 74-OR23-1A / CBS 708.71 / DSM 1257 / FGSC 987).